The primary structure comprises 842 residues: Elongation factor 2 (842 aa).

The tr-type G domain occupies 17–253 (TNVRNMSVIA…LWGDSYFNPK (237 aa)). Residues 26–33 (AHVDHGKS), 158–161 (NKVD), and 213–215 (SGL) each bind GTP. His699 bears the Diphthamide mark.

This sequence belongs to the TRAFAC class translation factor GTPase superfamily. Classic translation factor GTPase family. EF-G/EF-2 subfamily.

Its subcellular location is the cytoplasm. It catalyses the reaction GTP + H2O = GDP + phosphate + H(+). Catalyzes the GTP-dependent ribosomal translocation step during translation elongation. During this step, the ribosome changes from the pre-translocational (PRE) to the post-translocational (POST) state as the newly formed A-site-bound peptidyl-tRNA and P-site-bound deacylated tRNA move to the P and E sites, respectively. Catalyzes the coordinated movement of the two tRNA molecules, the mRNA and conformational changes in the ribosome. This chain is Elongation factor 2 (EFT1), found in Kluyveromyces lactis (strain ATCC 8585 / CBS 2359 / DSM 70799 / NBRC 1267 / NRRL Y-1140 / WM37) (Yeast).